Here is a 607-residue protein sequence, read N- to C-terminus: Guanine nucleotide-binding protein-like 1 (607 aa).

A compositionally biased stretch (basic residues) spans 1–14; it reads MPRKKPFSVKQKKK. The tract at residues 1–81 is disordered; it reads MPRKKPFSVK…GPRGYDPNRY (81 aa). Residues 15–26 show a composition bias toward basic and acidic residues; sequence QLQDKRERKRGL. Residues Ser-32, Ser-33, and Ser-34 each carry the phosphoserine modification. Phosphothreonine occurs at positions 48 and 50. A phosphoserine mark is found at Ser-51 and Ser-68. One can recognise a CP-type G domain in the interval 178 to 418; it reads WRQLWRVLEM…LCDCPGLIFP (241 aa). 225–228 contributes to the GTP binding site; the sequence is NKVD. A Phosphoserine modification is found at Ser-324. Residues 367–374 and 411–415 each bind GTP; these read GFPNVGKS and DCPGL. Positions 547 to 607 are disordered; that stretch reads GPAGDEEEEE…PYALLGEDEC (61 aa). The span at 550–584 shows a compositional bias: acidic residues; sequence GDEEEEEEEELSSSCEEEGEEDRDADEEGEGDEET. 3 positions are modified to phosphoserine: Ser-561, Ser-562, and Ser-563.

The protein belongs to the TRAFAC class YlqF/YawG GTPase family.

In terms of biological role, possible regulatory or functional link with the histocompatibility cluster. The sequence is that of Guanine nucleotide-binding protein-like 1 (GNL1) from Pan troglodytes (Chimpanzee).